The sequence spans 174 residues: MASASATATLLKPNLPPHKPTIIASSVSPPLPPPRRNHLLRRDFLSLAATSTLLTQSIQFLAPAPVSAAEDEEYIKDTSAVISKVRSTLSMQKTDPNVADAVAELREASNSWVAKYRKEKALLGKASFRDIYSALNAVSGHYVSFGPTAPIPAKRKARILEEMETAEKALTRGR.

A disordered region spans residues 1–35; the sequence is MASASATATLLKPNLPPHKPTIIASSVSPPLPPPR. T94 carries the phosphothreonine modification. Y132 is modified (phosphotyrosine).

It belongs to the Psb27 family.

The protein resides in the plastid. It localises to the chloroplast thylakoid membrane. Probably involved in repair of photodamaged photosystem II (PSII). The sequence is that of Photosystem II repair protein PSB27-H1, chloroplastic (PSB27-1) from Arabidopsis thaliana (Mouse-ear cress).